Reading from the N-terminus, the 126-residue chain is Large ribosomal subunit protein bL17c (126 aa).

Residues 1–10 constitute a chloroplast transit peptide; the sequence is MIDNGGRFFA.

As to quaternary structure, component of the chloroplast large ribosomal subunit (LSU). Mature 70S chloroplast ribosomes of higher plants consist of a small (30S) and a large (50S) subunit. The 30S small subunit contains 1 molecule of ribosomal RNA (16S rRNA) and 24 different proteins. The 50S large subunit contains 3 rRNA molecules (23S, 5S and 4.5S rRNA) and 33 different proteins.

The protein localises to the plastid. Its subcellular location is the chloroplast. In terms of biological role, component of the chloroplast ribosome (chloro-ribosome), a dedicated translation machinery responsible for the synthesis of chloroplast genome-encoded proteins, including proteins of the transcription and translation machinery and components of the photosynthetic apparatus. In Spinacia oleracea (Spinach), this protein is Large ribosomal subunit protein bL17c (RPL17).